Reading from the N-terminus, the 68-residue chain is Large ribosomal subunit protein bL31 (68 aa).

The Zn(2+) site is built by Cys-16, Cys-18, Cys-37, and Cys-40.

It belongs to the bacterial ribosomal protein bL31 family. Type A subfamily. As to quaternary structure, part of the 50S ribosomal subunit. The cofactor is Zn(2+).

Binds the 23S rRNA. The chain is Large ribosomal subunit protein bL31 from Nitrosococcus oceani (strain ATCC 19707 / BCRC 17464 / JCM 30415 / NCIMB 11848 / C-107).